Reading from the N-terminus, the 267-residue chain is Large ribosomal subunit protein uL3 (267 aa).

A disordered region spans residues 124–147 (NQHIGPKSHGGGGGSQPVRQTGSL).

This sequence belongs to the universal ribosomal protein uL3 family. As to quaternary structure, part of the 50S ribosomal subunit. Forms a cluster with proteins L14 and L19.

Its function is as follows. One of the primary rRNA binding proteins, it binds directly near the 3'-end of the 23S rRNA, where it nucleates assembly of the 50S subunit. The protein is Large ribosomal subunit protein uL3 of Mycoplasmopsis agalactiae (strain NCTC 10123 / CIP 59.7 / PG2) (Mycoplasma agalactiae).